Reading from the N-terminus, the 281-residue chain is 3-hydroxyanthranilate 3,4-dioxygenase (281 aa).

A domain A (catalytic) region spans residues 1 to 162 (MSGVTAIEIP…SNEFKTGKPG (162 aa)). R45 contacts O2. Fe cation is bound by residues H49, E55, and H93. E55 is a binding site for substrate. Substrate-binding residues include R97 and E107. A linker region spans residues 163–179 (KGTFACNAPYEARWTDL). Residues 180-281 (PVPINRKEFI…GFAITIRMPA (102 aa)) are domain B.

This sequence belongs to the 3-HAO family. Fe(2+) is required as a cofactor.

The protein resides in the cytoplasm. The catalysed reaction is 3-hydroxyanthranilate + O2 = (2Z,4Z)-2-amino-3-carboxymuconate 6-semialdehyde. The protein operates within cofactor biosynthesis; NAD(+) biosynthesis; quinolinate from L-kynurenine: step 3/3. Its function is as follows. Catalyzes the oxidative ring opening of 3-hydroxyanthranilate to 2-amino-3-carboxymuconate semialdehyde, which spontaneously cyclizes to quinolinate. This is 3-hydroxyanthranilate 3,4-dioxygenase (haao-1) from Caenorhabditis elegans.